The chain runs to 225 residues: Lipoprotein-releasing system ATP-binding protein LolD (225 aa).

The region spanning 5 to 225 (LEVMDLTKGY…RLVDGRVVAD (221 aa)) is the ABC transporter domain. 41-48 (GASGTGKS) serves as a coordination point for ATP.

This sequence belongs to the ABC transporter superfamily. Lipoprotein translocase (TC 3.A.1.125) family. The complex is composed of two ATP-binding proteins (LolD) and two transmembrane proteins (LolC and LolE).

It is found in the cell inner membrane. In terms of biological role, part of the ABC transporter complex LolCDE involved in the translocation of mature outer membrane-directed lipoproteins, from the inner membrane to the periplasmic chaperone, LolA. Responsible for the formation of the LolA-lipoprotein complex in an ATP-dependent manner. In Geobacter metallireducens (strain ATCC 53774 / DSM 7210 / GS-15), this protein is Lipoprotein-releasing system ATP-binding protein LolD.